A 156-amino-acid polypeptide reads, in one-letter code: ATP synthase subunit b (156 aa).

Residues 7–27 (LVAQMVVFFILWWVVAKFIWP) form a helical membrane-spanning segment.

The protein belongs to the ATPase B chain family. F-type ATPases have 2 components, F(1) - the catalytic core - and F(0) - the membrane proton channel. F(1) has five subunits: alpha(3), beta(3), gamma(1), delta(1), epsilon(1). F(0) has three main subunits: a(1), b(2) and c(10-14). The alpha and beta chains form an alternating ring which encloses part of the gamma chain. F(1) is attached to F(0) by a central stalk formed by the gamma and epsilon chains, while a peripheral stalk is formed by the delta and b chains.

It localises to the cell inner membrane. Its function is as follows. F(1)F(0) ATP synthase produces ATP from ADP in the presence of a proton or sodium gradient. F-type ATPases consist of two structural domains, F(1) containing the extramembraneous catalytic core and F(0) containing the membrane proton channel, linked together by a central stalk and a peripheral stalk. During catalysis, ATP synthesis in the catalytic domain of F(1) is coupled via a rotary mechanism of the central stalk subunits to proton translocation. In terms of biological role, component of the F(0) channel, it forms part of the peripheral stalk, linking F(1) to F(0). This Ralstonia pickettii (strain 12J) protein is ATP synthase subunit b.